The following is a 368-amino-acid chain: Agmatine deiminase (368 aa).

Cys357 acts as the Amidino-cysteine intermediate in catalysis.

The protein belongs to the agmatine deiminase family. Homodimer.

It catalyses the reaction agmatine + H2O = N-carbamoylputrescine + NH4(+). It participates in amine and polyamine biosynthesis; putrescine biosynthesis via agmatine pathway; N-carbamoylputrescine from agmatine: step 1/1. In terms of biological role, mediates the hydrolysis of agmatine into N-carbamoylputrescine in the arginine decarboxylase (ADC) pathway of putrescine biosynthesis, a basic polyamine. The polypeptide is Agmatine deiminase (Pseudomonas putida (strain ATCC 47054 / DSM 6125 / CFBP 8728 / NCIMB 11950 / KT2440)).